Reading from the N-terminus, the 328-residue chain is 2,4-dinitroanisole O-demethylase subunit alpha (328 aa).

Positions 1-9 (MSVTSQTSS) are excised as a propeptide. Zn(2+) is bound by residues His-101, His-103, Asp-105, His-168, His-225, and Cys-247.

Belongs to the metallo-beta-lactamase superfamily. As to quaternary structure, part of the complex DnhAB composed of the 2,4-dinitroanisole O-demethylase alpha (DnhA) and beta (DnhB) subunits. Zn(2+) serves as cofactor.

It carries out the reaction 2,4-dinitroanisole + H2O = 2,4-dinitrophenol + methanol + H(+). Its function is as follows. Involved in the degradation of 2,4-dinitroanisole (DNAN), an insensitive munition ingredient used in explosive formulations as a replacement for 2,4,6-trinitrotoluene (TNT). Catalyzes the removal of the methyl group from 2,4-dinitroanisole (DNAN) to yield 2,4-dinitrophenol (2,4-DNP) and methanol. The chain is 2,4-dinitroanisole O-demethylase subunit alpha from Nocardioides sp. (strain JS1661).